The chain runs to 60 residues: Mastoparan-V (60 aa).

Positions 1–27 (MKNTILILFTAFIALLGFFGMSAEALA) are cleaved as a signal peptide. 4 AXPX repeats span residues 27-30 (ADPV), 31-34 (ADPL), 35-38 (AGPN), and 41-44 (ADPE). The propeptide occupies 28 to 45 (DPVADPLAGPNAEADPEA). The residue at position 59 (Leu-59) is a Leucine amide.

Belongs to the MCD family. Mastoparan subfamily. As to expression, expressed by the venom gland.

Its subcellular location is the secreted. The protein resides in the target cell membrane. Its function is as follows. Antimicrobial and mast cell degranulating peptide. Has broad spectrum antibacterial activity against both Gram-positive and Gram-negative bacteria (S.aureus MIC=32-64 ug/ml, S.xylosus MIC=3 ug/ml, S.alactolyticus MIC=16 ug/ml, C.koseri MIC=4 ug/ml, E.coli MIC=8 ug/ml, K.pneumoniae MIC=64 ug/ml, P.aerugiosa MIC=256 ug/ml, S.choleraesuis MIC=32 ug/ml, S.typhimurium MIC=32 ug/ml, V.parahamelytics MIC=32 ug/ml). Affects membrane permeability of E.coli. Shows hemolytic activities on sheep, chicken and human erythrocytes. Its mast cell degranulation activity may be related to the activation of G-protein coupled receptors in mast cells as well as interaction with other proteins located in cell endosomal membranes in the mast cells. The polypeptide is Mastoparan-V (Vespa velutina flavitarsus (Asian hornet)).